Reading from the N-terminus, the 132-residue chain is Small ribosomal subunit protein uS8 (132 aa).

It belongs to the universal ribosomal protein uS8 family. Part of the 30S ribosomal subunit. Contacts proteins S5 and S12.

In terms of biological role, one of the primary rRNA binding proteins, it binds directly to 16S rRNA central domain where it helps coordinate assembly of the platform of the 30S subunit. The chain is Small ribosomal subunit protein uS8 from Desulforamulus reducens (strain ATCC BAA-1160 / DSM 100696 / MI-1) (Desulfotomaculum reducens).